Reading from the N-terminus, the 368-residue chain is D-amino-acid oxidase (368 aa).

Residues alanine 11, serine 14, lysine 35, histidine 36, cysteine 46, serine 47, glycine 51, asparagine 53, and phenylalanine 174 each contribute to the FAD site. Residues cysteine 230 and cysteine 285 are joined by a disulfide bond. 3 residues coordinate (R)-lactate: tyrosine 244, tyrosine 260, and arginine 308. Anthranilate contacts are provided by tyrosine 244, tyrosine 260, and arginine 308. Residues arginine 308, glycine 334, glycine 337, tyrosine 338, and glutamine 339 each coordinate FAD. The Microbody targeting signal motif lies at alanine 366–leucine 368.

The protein belongs to the DAMOX/DASOX family. Homotetramer. FAD is required as a cofactor. Post-translationally, the disulfide bond might contribute to the high thermal stability of the protein.

The protein resides in the peroxisome matrix. It carries out the reaction a D-alpha-amino acid + O2 + H2O = a 2-oxocarboxylate + H2O2 + NH4(+). It catalyses the reaction D-alanine + O2 + H2O = pyruvate + H2O2 + NH4(+). The catalysed reaction is D-glutamate + O2 + H2O = H2O2 + 2-oxoglutarate + NH4(+). The enzyme catalyses D-serine + O2 + H2O = 3-hydroxypyruvate + H2O2 + NH4(+). It carries out the reaction D-phenylalanine + O2 + H2O = 3-phenylpyruvate + H2O2 + NH4(+). It catalyses the reaction D-arginine + O2 + H2O = 5-guanidino-2-oxopentanoate + H2O2 + NH4(+). The catalysed reaction is D-methionine + O2 + H2O = 4-methylsulfanyl-2-oxobutanoate + H2O2 + NH4(+). The enzyme catalyses D-leucine + O2 + H2O = 4-methyl-2-oxopentanoate + H2O2 + NH4(+). It carries out the reaction D-lysine + O2 + H2O = 6-amino-2-oxohexanoate + H2O2 + NH4(+). It catalyses the reaction D-valine + O2 + H2O = 3-methyl-2-oxobutanoate + H2O2 + NH4(+). The catalysed reaction is D-histidine + O2 + H2O = 3-(imidazol-5-yl)pyruvate + H2O2 + NH4(+). The enzyme catalyses D-glutamine + O2 + H2O = 2-oxoglutaramate + H2O2 + NH4(+). It carries out the reaction D-isoleucine + O2 + H2O = (R)-3-methyl-2-oxopentanoate + H2O2 + NH4(+). It catalyses the reaction D-allo-isoleucine + O2 + H2O = (S)-3-methyl-2-oxopentanoate + H2O2 + NH4(+). The catalysed reaction is D-threonine + O2 + H2O = (S)-3-hydroxy-2-oxobutanoate + H2O2 + NH4(+). The enzyme catalyses D-asparagine + O2 + H2O = 2-oxosuccinamate + H2O2 + NH4(+). It carries out the reaction D-tryptophan + O2 + H2O = indole-3-pyruvate + H2O2 + NH4(+). It catalyses the reaction D-tyrosine + O2 + H2O = 3-(4-hydroxyphenyl)pyruvate + H2O2 + NH4(+). Partially inhibited by benzoate, crotonate, and D-malate. In terms of biological role, catalyzes the oxidative deamination of D-amino acids with broad substrate specificity. Enables the organism to utilize D-amino acids as a source of nutrients. Unusually, has high activity on D-glutamate. The chain is D-amino-acid oxidase from Talaromyces emersonii (Thermophilic fungus).